The chain runs to 313 residues: Protoheme IX farnesyltransferase (313 aa).

A run of 9 helical transmembrane segments spans residues 35–55, 56–76, 98–118, 120–140, 153–173, 180–200, 226–246, 248–268, and 285–305; these read LVIFTALVGLLLAPGYIHPVL, AFTSILCIAVGAGASGALNMW, VSKPEALTFGLVLSFFSVVTL, ILVNWFAAALLAFTIFFYVVI, IVIGGAAGALPPVVAWAAAAG, MLLFAIIFFWTPPHFWALALF, ILLYTIVLVAVAFAPWPLGYF, AIYGITSLALGGWMLLLTLRV, and FKFSILYLFALFAVLLLEVIV.

It belongs to the UbiA prenyltransferase family. Protoheme IX farnesyltransferase subfamily.

It is found in the cell inner membrane. The catalysed reaction is heme b + (2E,6E)-farnesyl diphosphate + H2O = Fe(II)-heme o + diphosphate. It participates in porphyrin-containing compound metabolism; heme O biosynthesis; heme O from protoheme: step 1/1. Functionally, converts heme B (protoheme IX) to heme O by substitution of the vinyl group on carbon 2 of heme B porphyrin ring with a hydroxyethyl farnesyl side group. This is Protoheme IX farnesyltransferase from Rhodopseudomonas palustris (strain BisB18).